A 332-amino-acid polypeptide reads, in one-letter code: 2,7-dihydroxy-5-methyl-1-naphthoate 7-O-methyltransferase (332 aa).

Arg11 lines the substrate pocket. Residues Trp133, His153, 175 to 179 (DVGGG), Gly177, Asp200, 227 to 228 (SF), and 242 to 243 (SA) each bind S-adenosyl-L-methionine. His246 functions as the Proton acceptor in the catalytic mechanism. Asp247 contributes to the substrate binding site.

The protein belongs to the class I-like SAM-binding methyltransferase superfamily. Cation-independent O-methyltransferase family.

It catalyses the reaction 2,7-dihydroxy-5-methyl-1-naphthoate + S-adenosyl-L-methionine = 2-hydroxy-7-methoxy-5-methyl-1-naphthoate + S-adenosyl-L-homocysteine + H(+). It functions in the pathway antibiotic biosynthesis. In terms of biological role, S-adenosyl-L-methionine-dependent O-methyltransferase that catalyzes regiospecific methylation at the 7-hydroxy group of 2,7-dihydroxy-5-methyl-1-naphthoate in the biosynthesis of the naphthoate moiety of the neocarzinostatin chromophore. Also recognizes other dihydroxynaphthoate as substrates and catalyzes their regiospecific O-methylation. The carboxylate and its ortho-hydroxy groups of the substrate appear to be crucial for NcsB1 substrate recognition and binding, and O-methylation takes place only at the free hydroxy group of these dihydroxynaphthoic acids. The protein is 2,7-dihydroxy-5-methyl-1-naphthoate 7-O-methyltransferase of Streptomyces carzinostaticus.